The primary structure comprises 764 residues: Zinc finger CCCH domain-containing protein 24 (764 aa).

2 ANK repeats span residues 108–138 (EHRTPLMVAATYGSLAVLRLLLSLPSVDVNR) and 143–175 (DGTTALHCAASGGSPSCVEAVKLLLAAGADADA). Residues 321–348 (HYSCVPCPDFRKGVCRRGDMCEYAHGVF) form a C3H1-type zinc finger. 2 disordered regions span residues 616-665 (QREK…DWGV) and 698-732 (KESPPEKQVTTAESINSVGPSPLMPPSVSNGEGPS). Low complexity predominate over residues 640–659 (SGVVGSPLSSSWSKWGSPSG). Over residues 705–716 (QVTTAESINSVG) the composition is skewed to polar residues.

The polypeptide is Zinc finger CCCH domain-containing protein 24 (Oryza sativa subsp. japonica (Rice)).